Consider the following 284-residue polypeptide: GPN-loop GTPase 3 (284 aa).

Residue 13 to 18 (GSGKST) participates in GTP binding. The short motif at 72–74 (GPN) is the Gly-Pro-Asn (GPN)-loop; involved in dimer interface element. 174–177 (TKMD) contributes to the GTP binding site. The disordered stretch occupies residues 261–284 (KEPKEHEDESSSMFDEYFQEHQNE).

This sequence belongs to the GPN-loop GTPase family. Heterodimer with GPN1. Binds to RNA polymerase II (RNAPII). Interacts directly with subunits RPB4 and RPB7 and the CTD of RPB1.

Its function is as follows. Small GTPase required for proper localization of RNA polymerase II (RNAPII). May act at an RNAP assembly step prior to nuclear import. The protein is GPN-loop GTPase 3 of Bos taurus (Bovine).